Reading from the N-terminus, the 201-residue chain is FMN reductase (NADH) RutF (201 aa).

Residues 169-201 (APRSGAAPAEPARAARALGARPAEGPALALRSA) are disordered.

It belongs to the non-flavoprotein flavin reductase family. RutF subfamily.

The enzyme catalyses FMNH2 + NAD(+) = FMN + NADH + 2 H(+). In terms of biological role, catalyzes the reduction of FMN to FMNH2 which is used to reduce pyrimidine by RutA via the Rut pathway. The protein is FMN reductase (NADH) RutF of Methylorubrum extorquens (strain ATCC 14718 / DSM 1338 / JCM 2805 / NCIMB 9133 / AM1) (Methylobacterium extorquens).